Consider the following 500-residue polypeptide: Protein nucleotidyltransferase YdiU (500 aa).

Positions 96, 98, 99, 119, 131, 132, 182, and 189 each coordinate ATP. Asp-258 functions as the Proton acceptor in the catalytic mechanism. Residues Asn-259 and Asp-268 each contribute to the Mg(2+) site. Asp-268 is an ATP binding site.

This sequence belongs to the SELO family. Mg(2+) is required as a cofactor. The cofactor is Mn(2+).

It catalyses the reaction L-seryl-[protein] + ATP = 3-O-(5'-adenylyl)-L-seryl-[protein] + diphosphate. It carries out the reaction L-threonyl-[protein] + ATP = 3-O-(5'-adenylyl)-L-threonyl-[protein] + diphosphate. The enzyme catalyses L-tyrosyl-[protein] + ATP = O-(5'-adenylyl)-L-tyrosyl-[protein] + diphosphate. The catalysed reaction is L-histidyl-[protein] + UTP = N(tele)-(5'-uridylyl)-L-histidyl-[protein] + diphosphate. It catalyses the reaction L-seryl-[protein] + UTP = O-(5'-uridylyl)-L-seryl-[protein] + diphosphate. It carries out the reaction L-tyrosyl-[protein] + UTP = O-(5'-uridylyl)-L-tyrosyl-[protein] + diphosphate. Functionally, nucleotidyltransferase involved in the post-translational modification of proteins. It can catalyze the addition of adenosine monophosphate (AMP) or uridine monophosphate (UMP) to a protein, resulting in modifications known as AMPylation and UMPylation. This chain is Protein nucleotidyltransferase YdiU, found in Rhizobium johnstonii (strain DSM 114642 / LMG 32736 / 3841) (Rhizobium leguminosarum bv. viciae).